We begin with the raw amino-acid sequence, 454 residues long: MTDRTCLSIVLAAGEGTRMKSNLPKVLHQVAGLPLVSHVVTAVQGTGKSDIALVVGRGADDVRAAVEKNAGPVSAFEQKERLGTAHAVLAAREAIERGYDDLLIVFGDTPLIEAQSLQKARERLAEGADVVVIGFRPDNPHGYGRLIEKGDKLVAIIEEKEATEEQKQIGFCNGGLMAVRGQHALALLDAVGNDNAKGEYYLTDIVAIAHSKGMNVTAIEVPVDNVIGINNRVELAEAEAIWQQRKRREMMLAGVTLIAPETVFFSHDTLIEADVIVEPNVFFGPRVHVATGALIHSFSHMEGAYVGPKAEIGPFARLRPGANLGEKTKVGNFCEVKNATVHKGAKINHLTYIGDATVGASSNIGAGTITCNYDGYNKYKTVIGENAFIGSNSSLVAPVEIGDNAYIASGSTITDNVPADALAFGRARQETKEGRAKILREKYAAIKAAKTATK.

The interval 1–232 (MTDRTCLSIV…VDNVIGINNR (232 aa)) is pyrophosphorylase. Residues 11 to 14 (LAAG), K25, Q78, and 83 to 84 (GT) contribute to the UDP-N-acetyl-alpha-D-glucosamine site. D108 lines the Mg(2+) pocket. Residues G144, E158, N173, and N230 each contribute to the UDP-N-acetyl-alpha-D-glucosamine site. N230 serves as a coordination point for Mg(2+). The tract at residues 233–253 (VELAEAEAIWQQRKRREMMLA) is linker. The interval 254–454 (GVTLIAPETV…AIKAAKTATK (201 aa)) is N-acetyltransferase. UDP-N-acetyl-alpha-D-glucosamine-binding residues include R319 and K337. H349 acts as the Proton acceptor in catalysis. UDP-N-acetyl-alpha-D-glucosamine-binding residues include Y352 and N363. Residues A366, 372 to 373 (NY), S391, S409, and R426 contribute to the acetyl-CoA site.

This sequence in the N-terminal section; belongs to the N-acetylglucosamine-1-phosphate uridyltransferase family. In the C-terminal section; belongs to the transferase hexapeptide repeat family. As to quaternary structure, homotrimer. Mg(2+) serves as cofactor.

The protein localises to the cytoplasm. It carries out the reaction alpha-D-glucosamine 1-phosphate + acetyl-CoA = N-acetyl-alpha-D-glucosamine 1-phosphate + CoA + H(+). The enzyme catalyses N-acetyl-alpha-D-glucosamine 1-phosphate + UTP + H(+) = UDP-N-acetyl-alpha-D-glucosamine + diphosphate. It functions in the pathway nucleotide-sugar biosynthesis; UDP-N-acetyl-alpha-D-glucosamine biosynthesis; N-acetyl-alpha-D-glucosamine 1-phosphate from alpha-D-glucosamine 6-phosphate (route II): step 2/2. Its pathway is nucleotide-sugar biosynthesis; UDP-N-acetyl-alpha-D-glucosamine biosynthesis; UDP-N-acetyl-alpha-D-glucosamine from N-acetyl-alpha-D-glucosamine 1-phosphate: step 1/1. The protein operates within bacterial outer membrane biogenesis; LPS lipid A biosynthesis. Its function is as follows. Catalyzes the last two sequential reactions in the de novo biosynthetic pathway for UDP-N-acetylglucosamine (UDP-GlcNAc). The C-terminal domain catalyzes the transfer of acetyl group from acetyl coenzyme A to glucosamine-1-phosphate (GlcN-1-P) to produce N-acetylglucosamine-1-phosphate (GlcNAc-1-P), which is converted into UDP-GlcNAc by the transfer of uridine 5-monophosphate (from uridine 5-triphosphate), a reaction catalyzed by the N-terminal domain. This is Bifunctional protein GlmU from Brucella anthropi (strain ATCC 49188 / DSM 6882 / CCUG 24695 / JCM 21032 / LMG 3331 / NBRC 15819 / NCTC 12168 / Alc 37) (Ochrobactrum anthropi).